The primary structure comprises 202 residues: Ras-related protein ORAB-1 (202 aa).

GTP-binding positions include 15 to 23 (GDSGVGKSC), 33 to 40 (YTESYIST), 63 to 67 (DTAGQ), 121 to 124 (NKCD), and 151 to 153 (SAK). The Effector region signature appears at 37 to 45 (YISTIGVDF). The tract at residues 173–202 (MGPGATSGGSEKSNVNIQSTPVKSSGGGCC) is disordered. Residues 180-195 (GGSEKSNVNIQSTPVK) show a composition bias toward polar residues. Residues cysteine 201 and cysteine 202 are each lipidated (S-geranylgeranyl cysteine).

The protein belongs to the small GTPase superfamily. Rab family.

It is found in the cell membrane. In terms of biological role, protein transport. Probably involved in vesicular traffic. The protein is Ras-related protein ORAB-1 of Diplobatis ommata (Ocellated electric ray).